The following is a 269-amino-acid chain: MRCTRAIRQTARTGWLTWLAILAVTAPVTSPAWADDPPATVYRYDSRPPEDVFQNGFTAWGNNDNVLDHLTGRSCQVGSSNSAFVSTSSSRRYTEVYLEHRMQEAVEAERAGRGTGHFIGYIYEVRADNNFYGAASSYFEYVDTYGDNAGRILAGALATYQSEYLAHRRIPPENIRRVTRVYHNGITGETTTTEYSNARYVSQQTRANPNPYTSRRSVASIVGTLVRMAPVIGACMARQAESSEAMAAWSERAGEAMVLVYYESIAYSF.

The first 34 residues, 1 to 34, serve as a signal peptide directing secretion; it reads MRCTRAIRQTARTGWLTWLAILAVTAPVTSPAWA. Position 60 (Trp-60) interacts with NAD(+). Active-site residues include His-69 and Glu-163. Cys-75 and Cys-235 are joined by a disulfide.

Belongs to the bacterial exotoxin subunit A family. As to quaternary structure, pertussis toxin contains five different chains, S1-S5. They are organized into 2 functional subunits: A, composed of S1 (which is toxic) and B, containing S2, S3, S5, and two copies of S4 (B binds to the membrane receptors). Dimers of S2-S4 and S3-S4 are held together by S5.

It is found in the secreted. Its function is as follows. S1 is an NAD-dependent ADP-ribosyltransferase, which plays a crucial role in the pathogenesis of B.pertussis causing disruption of normal host cellular regulation. It catalyzes the ADP-ribosylation of a cysteine in the alpha subunit of host heterotrimeric G proteins. In the absence of G proteins it also catalyzes the cleavage of NAD(+) into ADP-ribose and nicotinamide. It irreversibly uncouples the G-alpha GTP-binding proteins from their membrane receptors. This is Pertussis toxin subunit 1 (ptxA) from Bordetella pertussis (strain Tohama I / ATCC BAA-589 / NCTC 13251).